Consider the following 251-residue polypeptide: Ubiquinone/menaquinone biosynthesis C-methyltransferase UbiE (251 aa).

S-adenosyl-L-methionine-binding positions include threonine 74, aspartate 95, and asparagine 123–alanine 124.

The protein belongs to the class I-like SAM-binding methyltransferase superfamily. MenG/UbiE family.

The enzyme catalyses a 2-demethylmenaquinol + S-adenosyl-L-methionine = a menaquinol + S-adenosyl-L-homocysteine + H(+). It catalyses the reaction a 2-methoxy-6-(all-trans-polyprenyl)benzene-1,4-diol + S-adenosyl-L-methionine = a 5-methoxy-2-methyl-3-(all-trans-polyprenyl)benzene-1,4-diol + S-adenosyl-L-homocysteine + H(+). Its pathway is quinol/quinone metabolism; menaquinone biosynthesis; menaquinol from 1,4-dihydroxy-2-naphthoate: step 2/2. It functions in the pathway cofactor biosynthesis; ubiquinone biosynthesis. Methyltransferase required for the conversion of demethylmenaquinol (DMKH2) to menaquinol (MKH2) and the conversion of 2-polyprenyl-6-methoxy-1,4-benzoquinol (DDMQH2) to 2-polyprenyl-3-methyl-6-methoxy-1,4-benzoquinol (DMQH2). The chain is Ubiquinone/menaquinone biosynthesis C-methyltransferase UbiE from Shewanella putrefaciens (strain CN-32 / ATCC BAA-453).